The primary structure comprises 273 residues: 4-hydroxy-tetrahydrodipicolinate reductase (273 aa).

Residues Gly-12–Met-17 and Glu-38 contribute to the NAD(+) site. NADP(+) is bound at residue Arg-39. NAD(+) contacts are provided by residues Gly-102–Thr-104 and Ala-126–Phe-129. His-159 functions as the Proton donor/acceptor in the catalytic mechanism. His-160 contributes to the (S)-2,3,4,5-tetrahydrodipicolinate binding site. Lys-163 (proton donor) is an active-site residue. A (S)-2,3,4,5-tetrahydrodipicolinate-binding site is contributed by Gly-169–Thr-170.

Belongs to the DapB family. As to quaternary structure, homotetramer.

It localises to the cytoplasm. It carries out the reaction (S)-2,3,4,5-tetrahydrodipicolinate + NAD(+) + H2O = (2S,4S)-4-hydroxy-2,3,4,5-tetrahydrodipicolinate + NADH + H(+). The enzyme catalyses (S)-2,3,4,5-tetrahydrodipicolinate + NADP(+) + H2O = (2S,4S)-4-hydroxy-2,3,4,5-tetrahydrodipicolinate + NADPH + H(+). Its pathway is amino-acid biosynthesis; L-lysine biosynthesis via DAP pathway; (S)-tetrahydrodipicolinate from L-aspartate: step 4/4. Functionally, catalyzes the conversion of 4-hydroxy-tetrahydrodipicolinate (HTPA) to tetrahydrodipicolinate. The polypeptide is 4-hydroxy-tetrahydrodipicolinate reductase (Escherichia coli (strain K12 / MC4100 / BW2952)).